We begin with the raw amino-acid sequence, 344 residues long: Cysteine proteinase 5 (344 aa).

The signal sequence occupies residues 1-17 (MKVLSFLCVLLVSVATA). Residues 18-111 (KQQFSELQYR…TQEEKVFTTS (94 aa)) constitute a propeptide, activation peptide. Intrachain disulfides connect C133–C174, C167–C207, and C265–C333. C136 is an active-site residue. H272 is a catalytic residue. N297 is a glycosylation site (N-linked (GlcNAc...) asparagine). Residue N311 is part of the active site.

Belongs to the peptidase C1 family. Post-translationally, glycosylated; contains GlcNAc-alpha-1-P-Ser residues.

It is found in the lysosome. In Dictyostelium discoideum (Social amoeba), this protein is Cysteine proteinase 5 (cprE).